A 530-amino-acid polypeptide reads, in one-letter code: Developmental and secondary metabolism regulator VEL1 (530 aa).

A Velvet domain is found at Asn-26 to Arg-220. Residues Glu-40–Cys-45 carry the Nuclear localization signal motif. Residues Leu-206–Asp-516 form a disordered region. The span at Phe-244–Arg-253 shows a compositional bias: basic and acidic residues. Residues Tyr-295–Glu-305 show a composition bias toward pro residues. Polar residues predominate over residues Tyr-347–Ser-356. The span at Val-380–Gln-389 shows a compositional bias: basic and acidic residues. The segment covering Ser-390–Thr-404 has biased composition (low complexity). Residues Ser-415–Pro-426 are compositionally biased toward pro residues. A PEST region spans residues Met-429 to Ala-460. A compositionally biased stretch (polar residues) spans Phe-478–Arg-490.

It belongs to the velvet family. VeA subfamily. As to quaternary structure, component of the heterotrimeric velvet complex composed of LAE1, VEL1 and VEL2; VEL1 acting as a bridging protein between LAE1 and VEL2. Interacts with LAE1.

It is found in the nucleus. It localises to the cytoplasm. Component of the velvet transcription factor complex that controls sexual/asexual developmental ratio in response to light, promoting sexual development in the darkness while stimulating asexual sporulation under illumination. The velvet complex hat acts as a global regulator for secondary metabolite gene expression. Controls positively the expression of the gibberellins, fumonisins and fusarin C gene clusters. Controls the expression of the fusaric acid gene cluster. Controls negatively the expression of the bikaverin gene cluster. Regulates the expression of laeA. Plays a crucial role in virulence. This is Developmental and secondary metabolism regulator VEL1 from Gibberella fujikuroi (strain CBS 195.34 / IMI 58289 / NRRL A-6831) (Bakanae and foot rot disease fungus).